Reading from the N-terminus, the 420-residue chain is Acetyl-CoA acetyltransferase B, mitochondrial (420 aa).

The transit peptide at 1–33 (MAFCGPRTAARLSHSTRALHYTHRSFASPRTLN) directs the protein to the mitochondrion. The active-site Acyl-thioester intermediate is C119. Residues Y212, 251 to 253 (RVD), and K256 each bind CoA. A K(+)-binding site is contributed by Y212. Positions 273 and 274 each coordinate K(+). CoA is bound at residue S277. K(+) is bound at residue V374. Residue C406 is the Proton donor/acceptor of the active site.

The protein belongs to the thiolase-like superfamily. Thiolase family. In terms of assembly, homotetramer.

It localises to the mitochondrion. The catalysed reaction is 2 acetyl-CoA = acetoacetyl-CoA + CoA. It catalyses the reaction propanoyl-CoA + acetyl-CoA = 2-methyl-3-oxobutanoyl-CoA + CoA. It functions in the pathway lipid metabolism; fatty acid beta-oxidation. This is one of the enzymes that catalyzes the last step of the mitochondrial beta-oxidation pathway, an aerobic process breaking down fatty acids into acetyl-CoA. Using free coenzyme A/CoA, catalyzes the thiolytic cleavage of medium- to long-chain 3-oxoacyl-CoAs into acetyl-CoA and a fatty acyl-CoA shortened by two carbon atoms. The activity of the enzyme is reversible and it can also catalyze the condensation of two acetyl-CoA molecules into acetoacetyl-CoA. Thereby, it plays a major role in ketone body metabolism. The sequence is that of Acetyl-CoA acetyltransferase B, mitochondrial (acat1-b) from Xenopus laevis (African clawed frog).